Consider the following 302-residue polypeptide: Nucleoside kinase (302 aa).

Substrate-binding residues include Asp17, Gln33, Gly43, and Asn47. Residue Gln109 coordinates ATP. Substrate is bound by residues 111–113 (TFF) and Gln163. ATP contacts are provided by residues Asn186 and 214–219 (TKGSKG). Asp247 lines the substrate pocket. The active-site Proton acceptor is the Asp247.

In terms of assembly, homodimer. Mg(2+) serves as cofactor. Mn(2+) is required as a cofactor.

The catalysed reaction is cytidine + ATP = CMP + ADP + H(+). The enzyme catalyses guanosine + ATP = GMP + ADP + H(+). It catalyses the reaction inosine + ATP = IMP + ADP + H(+). Its function is as follows. Catalyzes the phosphorylation of a wide range of nucleosides to yield nucleoside monophosphates. Shows the highest activity for inosine, guanosine and cytidine, but very poor kinase activity with adenosine, thymidine, uridine and xanthosine. ATP is the best phosphate donor, but can also use ITP and GTP. Shows extremely low activity with fructose-6-phosphate. This chain is Nucleoside kinase, found in Methanocaldococcus jannaschii (strain ATCC 43067 / DSM 2661 / JAL-1 / JCM 10045 / NBRC 100440) (Methanococcus jannaschii).